We begin with the raw amino-acid sequence, 415 residues long: Probable N-acetyl-gamma-glutamyl-phosphate reductase, chloroplastic (415 aa).

Residues 1 to 74 constitute a chloroplast transit peptide; the sequence is MGSTALGGGA…SGVKSGEEVR (74 aa). The interval 48–68 is disordered; it reads VRASVASSPQKQHSPKTSGVK. Residues 56-67 show a composition bias toward polar residues; the sequence is PQKQHSPKTSGV. Cysteine 219 is an active-site residue.

This sequence belongs to the NAGSA dehydrogenase family. Type 1 subfamily. In terms of assembly, homotetramer.

It is found in the plastid. The protein localises to the chloroplast. The catalysed reaction is N-acetyl-L-glutamate 5-semialdehyde + phosphate + NADP(+) = N-acetyl-L-glutamyl 5-phosphate + NADPH + H(+). It functions in the pathway amino-acid biosynthesis; L-arginine biosynthesis; N(2)-acetyl-L-ornithine from L-glutamate: step 3/4. The chain is Probable N-acetyl-gamma-glutamyl-phosphate reductase, chloroplastic from Oryza sativa subsp. japonica (Rice).